Here is a 56-residue protein sequence, read N- to C-terminus: Large ribosomal subunit protein bL33 (56 aa).

Belongs to the bacterial ribosomal protein bL33 family.

This Anaplasma marginale (strain Florida) protein is Large ribosomal subunit protein bL33.